We begin with the raw amino-acid sequence, 1013 residues long: RNA-binding protein 44 (1013 aa).

Disordered regions lie at residues M1 to D25 and L56 to Q94. Over residues L56–S76 the composition is skewed to basic and acidic residues. Residues L78–Q94 show a composition bias toward polar residues. Phosphoserine occurs at positions 365, 368, 510, 681, and 688. The RRM domain maps to F792 to I865. A disordered region spans residues R905–G925.

As to quaternary structure, homodimer. Interacts with TEX14. In terms of tissue distribution, highly expressed in testis. Also expressed in other tissues at lower level.

The protein localises to the cytoplasm. In terms of biological role, component of intercellular bridges during meiosis. Intercellular bridges are evolutionarily conserved structures that connect differentiating germ cells. Not required for fertility. The polypeptide is RNA-binding protein 44 (Rbm44) (Mus musculus (Mouse)).